The following is an 83-amino-acid chain: Parvalbumin beta 3 (83 aa).

EF-hand domains lie at 13–48 (KSNDDVKKAFFVIDQDKSGFIEEDELKLFLQNFSAG) and 52–83 (LTAGETKTFLAAGDSDGDGMIGVDEFQALVKA). The Ca(2+) site is built by aspartate 26, aspartate 28, serine 30, phenylalanine 32, glutamate 34, glutamate 37, aspartate 65, aspartate 67, aspartate 69, methionine 71, and glutamate 76.

This sequence belongs to the parvalbumin family.

Its function is as follows. In muscle, parvalbumin is thought to be involved in relaxation after contraction. It binds two calcium ions. The chain is Parvalbumin beta 3 from Macruronus novaezelandiae (Blue grenadier).